Here is a 349-residue protein sequence, read N- to C-terminus: 4-hydroxy-3-methylbut-2-en-1-yl diphosphate synthase (flavodoxin) (349 aa).

4 residues coordinate [4Fe-4S] cluster: Cys-265, Cys-268, Cys-300, and Glu-307.

It belongs to the IspG family. It depends on [4Fe-4S] cluster as a cofactor.

It carries out the reaction (2E)-4-hydroxy-3-methylbut-2-enyl diphosphate + oxidized [flavodoxin] + H2O + 2 H(+) = 2-C-methyl-D-erythritol 2,4-cyclic diphosphate + reduced [flavodoxin]. Its pathway is isoprenoid biosynthesis; isopentenyl diphosphate biosynthesis via DXP pathway; isopentenyl diphosphate from 1-deoxy-D-xylulose 5-phosphate: step 5/6. Its function is as follows. Converts 2C-methyl-D-erythritol 2,4-cyclodiphosphate (ME-2,4cPP) into 1-hydroxy-2-methyl-2-(E)-butenyl 4-diphosphate. The chain is 4-hydroxy-3-methylbut-2-en-1-yl diphosphate synthase (flavodoxin) from Thermodesulfovibrio yellowstonii (strain ATCC 51303 / DSM 11347 / YP87).